Consider the following 129-residue polypeptide: MAKTAKKGPKKAKRNVPNGVAHIQSTFNNTIVSITDTAGEVIAWSSAGASGFKGARKGTPFAAQTAAEAAARRALEQGMRQIEVLVRGPGSGRETAIRALQVAGLEITLIRDVTPLPHNGCRRAKRRRV.

Belongs to the universal ribosomal protein uS11 family. As to quaternary structure, part of the 30S ribosomal subunit. Interacts with proteins S7 and S18. Binds to IF-3.

Located on the platform of the 30S subunit, it bridges several disparate RNA helices of the 16S rRNA. Forms part of the Shine-Dalgarno cleft in the 70S ribosome. The chain is Small ribosomal subunit protein uS11 from Synechococcus sp. (strain RCC307).